A 383-amino-acid polypeptide reads, in one-letter code: Protein RecA (383 aa).

79-86 (GPESSGKT) contributes to the ATP binding site.

It belongs to the RecA family.

It localises to the cytoplasm. In terms of biological role, can catalyze the hydrolysis of ATP in the presence of single-stranded DNA, the ATP-dependent uptake of single-stranded DNA by duplex DNA, and the ATP-dependent hybridization of homologous single-stranded DNAs. It interacts with LexA causing its activation and leading to its autocatalytic cleavage. In Streptococcus gordonii (strain Challis / ATCC 35105 / BCRC 15272 / CH1 / DL1 / V288), this protein is Protein RecA.